Consider the following 66-residue polypeptide: Stress-induced protein KIN2 (66 aa).

The segment covering 1 to 10 (MSETNKNAFQ) has biased composition (polar residues). The segment at 1–20 (MSETNKNAFQAGQAAGKAEE) is disordered. Repeats lie at residues 31–35 (DAAAA) and 49–53 (DAAVG).

As to quaternary structure, interacts with DEK3. Expressed at high levels in embryos and mature seeds.

This Arabidopsis thaliana (Mouse-ear cress) protein is Stress-induced protein KIN2.